We begin with the raw amino-acid sequence, 156 residues long: Large ribosomal subunit protein uL15 (156 aa).

Over residues 1–16 (MVRRFKRAVKYRRGSR) the composition is skewed to basic residues. A disordered region spans residues 1–35 (MVRRFKRAVKYRRGSRTHGWGRVGQHRKSGGSGGK).

Belongs to the universal ribosomal protein uL15 family. In terms of assembly, part of the 50S ribosomal subunit.

Its function is as follows. Binds to the 23S rRNA. The protein is Large ribosomal subunit protein uL15 of Pyrobaculum neutrophilum (strain DSM 2338 / JCM 9278 / NBRC 100436 / V24Sta) (Thermoproteus neutrophilus).